The following is a 362-amino-acid chain: Cytoskeleton protein RodZ (362 aa).

Residues M1–G111 lie on the Cytoplasmic side of the membrane. One can recognise an HTH cro/C1-type domain in the interval L19 to L79. The segment at residues Q30–E49 is a DNA-binding region (H-T-H motif). Residues W112–W132 form a helical; Signal-anchor for type II membrane protein membrane-spanning segment. Over W133–E362 the chain is Periplasmic. Residues S151–G277 are disordered. A compositionally biased stretch (low complexity) spans S193 to T221. The span at V223 to H242 shows a compositional bias: polar residues. Residues A246 to P259 show a composition bias toward low complexity.

Belongs to the RodZ family.

The protein resides in the cell inner membrane. Functionally, cytoskeletal protein that is involved in cell-shape control through regulation of the length of the long axis. This is Cytoskeleton protein RodZ from Yersinia pseudotuberculosis serotype IB (strain PB1/+).